A 338-amino-acid chain; its full sequence is MESKTTQNGSEVVELTEFEKTQKKYQDFIATLPKSKGWRPDEILTQYGGHWWQECLLEGLFHAKDHFEARPTDFLVCSYPKTGTTWLKALTYAIVNRSRYDDAANPLLKRNPHEFVPYVEIDFAFYPTVDVLQDRKNPLFSTHIPNGLLPDSIVNSGCKMVYIWRDPKDTFISMWTFLHKEKSQEGQLASLEDSFDMFCKGLSVYGPYLDHVLGYWKAYQENPDRILFLRYETMRANPLPFVKRLAEFMGYGFTDEEEENGVAEKVVKLCSFETLKNLEANKGDKEREDRPAVYANSAYFRKGKVGDWANYLTPEMAARIDGLVEEKFKDTGLLQHDN.

3'-phosphoadenylyl sulfate is bound at residue 81–86 (KTGTTW). Histidine 143 functions as the Proton acceptor in the catalytic mechanism. 3'-phosphoadenylyl sulfate-binding positions include arginine 165, serine 173, tyrosine 231, and 301-303 (RKG).

The protein belongs to the sulfotransferase 1 family. Highly expressed in roots, stems and mature leaves. Low expression in young leaves and flowers. Barely detected in siliques.

It is found in the cytoplasm. The enzyme catalyses (Z)-desulfoglucotropeolin + 3'-phosphoadenylyl sulfate = (Z)-glucotropeolin + adenosine 3',5'-bisphosphate + H(+). It catalyses the reaction (Z)-indolylmethyl desulfoglucosinolate + 3'-phosphoadenylyl sulfate = (Z)-glucobrassicin + adenosine 3',5'-bisphosphate + H(+). Inhibited by phosphoadenosine 5'-phosphate (PAP). Functionally, sulfotransferase that utilizes 3'-phospho-5'-adenylyl sulfate (PAPS) as sulfonate donor to catalyze the sulfate conjugation of desulfo-glucosinolates (dsGSs), the final step in the biosynthesis of the glucosinolate core structure. Substrate preference is desulfo-2-phenylethyl glucosinolate &gt; desulfo-indol-3-yl methyl glucosinolate &gt; desulfo-benzyl glucosinolate &gt; desulfo-6-methylthiohexyl glucosinolate &gt; desulfo-4-methylthiobutyl glucosinolate &gt; desulfo-3-methylthiopropyl glucosinolate &gt; desulfo-singrin &gt; desulfo-3-butenyl glucosinolate. This chain is Cytosolic sulfotransferase 16 (SOT16), found in Arabidopsis thaliana (Mouse-ear cress).